Consider the following 182-residue polypeptide: Putative manganese efflux pump MntP (182 aa).

A run of 6 helical transmembrane segments spans residues 6-26, 37-57, 71-91, 101-121, 131-151, and 162-182; these read LIPL…VSLG, ILYI…IGMV, HFAG…SSIL, IGIS…SVGL, VITI…GLFI, and YGEI…LFPI.

Belongs to the MntP (TC 9.B.29) family.

Its subcellular location is the cell membrane. Probably functions as a manganese efflux pump. This Bacillus cereus (strain AH187) protein is Putative manganese efflux pump MntP.